A 444-amino-acid polypeptide reads, in one-letter code: Sensor protein CiaH (444 aa).

Transmembrane regions (helical) follow at residues 21 to 41 (FGVFTLIFSTMTLIILQVMHS) and 183 to 203 (LIVVVMASFWILSLLASLYLA). Residues 223 to 438 (NASHELRTPL…IFEVKIAIQT (216 aa)) enclose the Histidine kinase domain. At histidine 226 the chain carries Phosphohistidine; by autocatalysis.

It is found in the cell membrane. The enzyme catalyses ATP + protein L-histidine = ADP + protein N-phospho-L-histidine.. In terms of biological role, member of the two-component regulatory system CiaH/CiaR. Involved in early steps of competence regulation and in penicillin susceptibility. Probably phosphorylates CiaR. The sequence is that of Sensor protein CiaH (ciaH) from Streptococcus pneumoniae serotype 4 (strain ATCC BAA-334 / TIGR4).